A 169-amino-acid chain; its full sequence is Myosin regulatory light chain 11 (169 aa).

Ala-2 bears the N,N,N-trimethylalanine mark. Phosphoserine occurs at positions 15 and 16. Thr-25 and Thr-35 each carry phosphothreonine. The EF-hand 1 domain maps to 25 to 60 (TQIQEFKEAFTVIDQNRDGIIDKEDLRDTFAAMGRL). 4 residues coordinate Ca(2+): Asp-38, Asn-40, Asp-42, and Asp-49. Phosphoserine is present on Ser-75. EF-hand domains follow at residues 95-130 (DPED…QCDR) and 131-166 (FSQE…GDAK). Thr-101 is modified (phosphothreonine).

Myosin is a hexamer of 2 heavy chains and 4 light chains.

In terms of biological role, myosin regulatory subunit that plays an essential role to maintain muscle integrity during early development. Plays a role in regulation of muscle contraction. The chain is Myosin regulatory light chain 11 (Myl11) from Mus musculus (Mouse).